A 155-amino-acid polypeptide reads, in one-letter code: Cell division protein SepF (155 aa).

Over residues 16-35 the composition is skewed to acidic residues; it reads TEDEEEDVETVEESEDVEEE. A disordered region spans residues 16 to 44; sequence TEDEEEDVETVEESEDVEEEESKKPQFIQ.

This sequence belongs to the SepF family. Homodimer. Interacts with FtsZ.

The protein localises to the cytoplasm. Its function is as follows. Cell division protein that is part of the divisome complex and is recruited early to the Z-ring. Probably stimulates Z-ring formation, perhaps through the cross-linking of FtsZ protofilaments. Its function overlaps with FtsA. This chain is Cell division protein SepF, found in Acetivibrio thermocellus (strain ATCC 27405 / DSM 1237 / JCM 9322 / NBRC 103400 / NCIMB 10682 / NRRL B-4536 / VPI 7372) (Clostridium thermocellum).